The chain runs to 243 residues: UPF0246 protein MGAS10750_Spy1880 (243 aa).

The protein belongs to the UPF0246 family.

The protein is UPF0246 protein MGAS10750_Spy1880 of Streptococcus pyogenes serotype M4 (strain MGAS10750).